The following is a 145-amino-acid chain: Mannitol-specific phosphotransferase enzyme IIA component (145 aa).

The PTS EIIA type-2 domain occupies 4 to 144 (PILKKENIVL…EEILSILNEV (141 aa)). Catalysis depends on His-64, which acts as the Tele-phosphohistidine intermediate. At His-64 the chain carries Phosphohistidine; by HPr.

It localises to the cytoplasm. Its function is as follows. The phosphoenolpyruvate-dependent sugar phosphotransferase system (sugar PTS), a major carbohydrate active transport system, catalyzes the phosphorylation of incoming sugar substrates concomitantly with their translocation across the cell membrane. The enzyme II CmtAB PTS system is involved in D-mannitol transport. The polypeptide is Mannitol-specific phosphotransferase enzyme IIA component (Geobacillus stearothermophilus (Bacillus stearothermophilus)).